A 299-amino-acid chain; its full sequence is GTP cyclohydrolase FolE2 (299 aa).

Positions 1–25 (MKTKQWPSKTERHKRFGSVPPVAGK) are disordered.

It belongs to the GTP cyclohydrolase IV family.

It carries out the reaction GTP + H2O = 7,8-dihydroneopterin 3'-triphosphate + formate + H(+). The protein operates within cofactor biosynthesis; 7,8-dihydroneopterin triphosphate biosynthesis; 7,8-dihydroneopterin triphosphate from GTP: step 1/1. Converts GTP to 7,8-dihydroneopterin triphosphate. The sequence is that of GTP cyclohydrolase FolE2 from Halalkalibacterium halodurans (strain ATCC BAA-125 / DSM 18197 / FERM 7344 / JCM 9153 / C-125) (Bacillus halodurans).